The chain runs to 61 residues: Large ribosomal subunit protein eL29 (61 aa).

Positions 1 to 26 are enriched in basic residues; that stretch reads MAKSKNHTNHNQNKKAHRNGIKRPQK. A disordered region spans residues 1-32; sequence MAKSKNHTNHNQNKKAHRNGIKRPQKHRYDSL.

Belongs to the eukaryotic ribosomal protein eL29 family. As to quaternary structure, component of the large ribosomal subunit (LSU). Mature yeast ribosomes consist of a small (40S) and a large (60S) subunit. The 40S small subunit contains 1 molecule of ribosomal RNA (18S rRNA) and at least 33 different proteins. The large 60S subunit contains 3 rRNA molecules (25S, 5.8S and 5S rRNA) and at least 46 different proteins.

It localises to the cytoplasm. The protein resides in the nucleus. The protein localises to the nucleolus. Component of the ribosome, a large ribonucleoprotein complex responsible for the synthesis of proteins in the cell. The small ribosomal subunit (SSU) binds messenger RNAs (mRNAs) and translates the encoded message by selecting cognate aminoacyl-transfer RNA (tRNA) molecules. The large subunit (LSU) contains the ribosomal catalytic site termed the peptidyl transferase center (PTC), which catalyzes the formation of peptide bonds, thereby polymerizing the amino acids delivered by tRNAs into a polypeptide chain. The nascent polypeptides leave the ribosome through a tunnel in the LSU and interact with protein factors that function in enzymatic processing, targeting, and the membrane insertion of nascent chains at the exit of the ribosomal tunnel. In Schizosaccharomyces pombe (strain 972 / ATCC 24843) (Fission yeast), this protein is Large ribosomal subunit protein eL29 (rpl29).